The following is a 241-amino-acid chain: 1-(5-phosphoribosyl)-5-[(5-phosphoribosylamino)methylideneamino] imidazole-4-carboxamide isomerase (241 aa).

The active-site Proton acceptor is Asp-11. Residue Asp-130 is the Proton donor of the active site.

Belongs to the HisA/HisF family.

Its subcellular location is the cytoplasm. The enzyme catalyses 1-(5-phospho-beta-D-ribosyl)-5-[(5-phospho-beta-D-ribosylamino)methylideneamino]imidazole-4-carboxamide = 5-[(5-phospho-1-deoxy-D-ribulos-1-ylimino)methylamino]-1-(5-phospho-beta-D-ribosyl)imidazole-4-carboxamide. It functions in the pathway amino-acid biosynthesis; L-histidine biosynthesis; L-histidine from 5-phospho-alpha-D-ribose 1-diphosphate: step 4/9. The sequence is that of 1-(5-phosphoribosyl)-5-[(5-phosphoribosylamino)methylideneamino] imidazole-4-carboxamide isomerase from Acidothermus cellulolyticus (strain ATCC 43068 / DSM 8971 / 11B).